Consider the following 185-residue polypeptide: dCTP deaminase (185 aa).

DCTP contacts are provided by residues 108–113 (KSTYAR), 132–134 (TLE), glutamine 153, tyrosine 167, and glutamine 177. Glutamate 134 serves as the catalytic Proton donor/acceptor.

It belongs to the dCTP deaminase family. Homotrimer.

It carries out the reaction dCTP + H2O + H(+) = dUTP + NH4(+). It functions in the pathway pyrimidine metabolism; dUMP biosynthesis; dUMP from dCTP (dUTP route): step 1/2. Functionally, catalyzes the deamination of dCTP to dUTP. The protein is dCTP deaminase of Pelagibacter ubique (strain HTCC1062).